Consider the following 86-residue polypeptide: MIHPSYVELMKVVNNNVEIGEEPVVNSRYSIVIAAAKRARQIIDGAEPLIAHPKCNKPLSIAVEELYTGAVRIVSDDEDLNEGEEA.

Belongs to the RNA polymerase subunit omega family. In terms of assembly, the RNAP catalytic core consists of 2 alpha, 1 beta, 1 beta' and 1 omega subunit. When a sigma factor is associated with the core the holoenzyme is formed, which can initiate transcription.

The catalysed reaction is RNA(n) + a ribonucleoside 5'-triphosphate = RNA(n+1) + diphosphate. In terms of biological role, promotes RNA polymerase assembly. Latches the N- and C-terminal regions of the beta' subunit thereby facilitating its interaction with the beta and alpha subunits. The protein is DNA-directed RNA polymerase subunit omega of Agathobacter rectalis (strain ATCC 33656 / DSM 3377 / JCM 17463 / KCTC 5835 / VPI 0990) (Eubacterium rectale).